The primary structure comprises 309 residues: HPr kinase/phosphorylase (309 aa).

Catalysis depends on residues histidine 139 and lysine 160. 154-161 contacts ATP; that stretch reads GESGIGKS. Serine 161 is a Mg(2+) binding site. Aspartate 178 acts as the Proton acceptor; for phosphorylation activity. Proton donor; for dephosphorylation activity in catalysis. Positions 202 to 211 are important for the catalytic mechanism of both phosphorylation and dephosphorylation; it reads IELRGIGIID. Glutamate 203 is a binding site for Mg(2+). The active site involves arginine 244. The interval 265–270 is important for the catalytic mechanism of dephosphorylation; the sequence is PIRPGR.

It belongs to the HPrK/P family. Homohexamer. Requires Mg(2+) as cofactor.

It carries out the reaction [HPr protein]-L-serine + ATP = [HPr protein]-O-phospho-L-serine + ADP + H(+). The catalysed reaction is [HPr protein]-O-phospho-L-serine + phosphate + H(+) = [HPr protein]-L-serine + diphosphate. Functionally, catalyzes the ATP- as well as the pyrophosphate-dependent phosphorylation of a specific serine residue in HPr, a phosphocarrier protein of the phosphoenolpyruvate-dependent sugar phosphotransferase system (PTS). HprK/P also catalyzes the pyrophosphate-producing, inorganic phosphate-dependent dephosphorylation (phosphorolysis) of seryl-phosphorylated HPr (P-Ser-HPr). The two antagonistic activities of HprK/P are regulated by several intracellular metabolites, which change their concentration in response to the absence or presence of rapidly metabolisable carbon sources (glucose, fructose, etc.) in the growth medium. Therefore, by controlling the phosphorylation state of HPr, HPrK/P is a sensor enzyme that plays a major role in the regulation of carbon metabolism and sugar transport: it mediates carbon catabolite repression (CCR), and regulates PTS-catalyzed carbohydrate uptake and inducer exclusion. This chain is HPr kinase/phosphorylase, found in Lachnoclostridium phytofermentans (strain ATCC 700394 / DSM 18823 / ISDg) (Clostridium phytofermentans).